Reading from the N-terminus, the 403-residue chain is MSHRKFSAPRHGSLGFLPRKRSSRHRGKVKSFPKDDPSKPVHLTAFLGYKAGMTHIVREVDRPGSKVNKKEVVEAVTIVETPPMVVVGIVGYVETPRGLRTFKTVFAEHISDECKRRFYKNWHKSKKKAFTKYCKKWQDDAGKRQLDKDFSSMKKYCQVIRVLAHTQMRLLPLRQKKAHLMEIQVNGGTVAEKLDWARERLEQQVPVSQVFGQDEMIDVIGVTKGKGYKGVTSRWHTKKLPRKTHRGLRKVACIGAWHPARVAFSVARAGQKGYHHRTEINKKIYKIGQGYLIKDGKLIKNNASTDYDLSDKSINPLGGFVHYGEVTNDFVMLKGCVVGTKKRVLTLRKSLLVQTKRRALEKIDLKFIDTTSKFGHGRFQTVEEKKAFMGPLKKDRIAKEEGA.

The segment at 1-37 is disordered; sequence MSHRKFSAPRHGSLGFLPRKRSSRHRGKVKSFPKDDP. Ser13 bears the Phosphoserine mark. A compositionally biased stretch (basic residues) spans 18-31; the sequence is PRKRSSRHRGKVKS. A Glycyl lysine isopeptide (Lys-Gly) (interchain with G-Cter in SUMO2) cross-link involves residue Lys39. An N6-acetyllysine modification is found at Lys136. Glycyl lysine isopeptide (Lys-Gly) (interchain with G-Cter in SUMO2) cross-links involve residues Lys224 and Lys226. A Tele-methylhistidine modification is found at His245. Lys286 and Lys294 each carry N6-acetyllysine; alternate. Residue Lys286 forms a Glycyl lysine isopeptide (Lys-Gly) (interchain with G-Cter in SUMO2); alternate linkage. Lys294 participates in a covalent cross-link: Glycyl lysine isopeptide (Lys-Gly) (interchain with G-Cter in SUMO1); alternate. Ser304 carries the phosphoserine modification. Lys366 carries the N6-acetyllysine; alternate modification. Lys366 is covalently cross-linked (Glycyl lysine isopeptide (Lys-Gly) (interchain with G-Cter in SUMO2); alternate). Position 373 is an N6-acetyllysine (Lys373). Residues Lys386, Lys393, and Lys399 each participate in a glycyl lysine isopeptide (Lys-Gly) (interchain with G-Cter in SUMO2) cross-link.

Belongs to the universal ribosomal protein uL3 family. In terms of assembly, component of the large ribosomal subunit. Interacts with DHX33. In terms of processing, constitutively monomethylated at His-245 by METTL18. Methylation at His-245 regulates translation elongation by slowing ribosome traversal on tyrosine codons: slower elongation provides enough time for proper folding of synthesized proteins and prevents cellular aggregation of tyrosine-rich proteins. It is not required for incorporation of RPL3 into ribosomes.

The protein resides in the nucleus. The protein localises to the nucleolus. Its subcellular location is the cytoplasm. Its function is as follows. Component of the large ribosomal subunit. The ribosome is a large ribonucleoprotein complex responsible for the synthesis of proteins in the cell. This Oryctolagus cuniculus (Rabbit) protein is Large ribosomal subunit protein uL3 (RPL3).